The sequence spans 365 residues: Phosphoserine aminotransferase (365 aa).

Position 40 (Arg40) interacts with L-glutamate. Residues 74–75 (AS), Phe99, Thr155, Asp177, and Gln200 each bind pyridoxal 5'-phosphate. Lys201 carries the post-translational modification N6-(pyridoxal phosphate)lysine. Residue 241–242 (NT) coordinates pyridoxal 5'-phosphate.

Belongs to the class-V pyridoxal-phosphate-dependent aminotransferase family. SerC subfamily. Homodimer. Requires pyridoxal 5'-phosphate as cofactor.

It is found in the cytoplasm. It carries out the reaction O-phospho-L-serine + 2-oxoglutarate = 3-phosphooxypyruvate + L-glutamate. The enzyme catalyses 4-(phosphooxy)-L-threonine + 2-oxoglutarate = (R)-3-hydroxy-2-oxo-4-phosphooxybutanoate + L-glutamate. The protein operates within amino-acid biosynthesis; L-serine biosynthesis; L-serine from 3-phospho-D-glycerate: step 2/3. Its function is as follows. Catalyzes the reversible conversion of 3-phosphohydroxypyruvate to phosphoserine and of 3-hydroxy-2-oxo-4-phosphonooxybutanoate to phosphohydroxythreonine. In Lactococcus lactis subsp. cremoris (strain MG1363), this protein is Phosphoserine aminotransferase.